The sequence spans 432 residues: Trigger factor (432 aa).

Residues 161 to 246 (EDRVTIDFTG…LKKVEERELP (86 aa)) enclose the PPIase FKBP-type domain.

This sequence belongs to the FKBP-type PPIase family. Tig subfamily. Homodimer and monomer. In vivo most of the ribosomes are in complex with monomeric TF. Uncomplexed TF, however, is in a monomer-dimer equilibrium with approximately two thirds of TF existing in a dimeric state.

The protein localises to the cytoplasm. It catalyses the reaction [protein]-peptidylproline (omega=180) = [protein]-peptidylproline (omega=0). In terms of biological role, involved in protein export. Acts as a chaperone by maintaining the newly synthesized protein in an open conformation. Functions as a peptidyl-prolyl cis-trans isomerase. In Escherichia coli O139:H28 (strain E24377A / ETEC), this protein is Trigger factor.